The following is a 105-amino-acid chain: Nucleoid-associated protein TTHA1599 (105 aa).

This sequence belongs to the YbaB/EbfC family. In terms of assembly, homodimer.

It localises to the cytoplasm. The protein localises to the nucleoid. In terms of biological role, binds to DNA and alters its conformation. May be involved in regulation of gene expression, nucleoid organization and DNA protection. This Thermus thermophilus (strain ATCC 27634 / DSM 579 / HB8) protein is Nucleoid-associated protein TTHA1599.